Reading from the N-terminus, the 376-residue chain is Protein insensitive (376 aa).

Residues 50–79 (QVEVENRALRDKVRYLEAKLQQHKDLLSQI) are a coiled coil. One can recognise a BEN domain in the interval 258–356 (GPNNTCVPAS…TKCADENKMM (99 aa)).

In terms of assembly, homodimer. Interacts (via BEN domain) with Su(H). Interacts with Cp190.

Its subcellular location is the nucleus. Functionally, can act as both a transcriptional repressor and corepressor. Represses the expression of genes involved in neural development and preferentially binds palindromic sequence 5'-CCAATTGG-3' to mediate transcriptional repression. Acts as a corepressor for suppressor of hairless (Su(H)) and inhibits Notch signaling during peripheral nervous system development. In Drosophila melanogaster (Fruit fly), this protein is Protein insensitive (insv).